The primary structure comprises 745 residues: Aminopeptidase NAALADL1 (745 aa).

Residues 1-6 (MHWAKI) are Cytoplasmic-facing. Residues 7–28 (LGVGIGAAALLGLGIILGHFAI) form a helical; Signal-anchor for type II membrane protein membrane-spanning segment. Residues 29-745 (PKATEPLASS…AATLQPVTDL (717 aa)) are Extracellular-facing. Asn-128, Asn-141, and Asn-235 each carry an N-linked (GlcNAc...) asparagine glycan. Residues Thr-263 and Leu-266 each coordinate Ca(2+). N-linked (GlcNAc...) asparagine glycans are attached at residues Asn-279, Asn-304, and Asn-350. The cysteines at positions 301 and 318 are disulfide-linked. Residues His-373 and Asp-383 each contribute to the Zn(2+) site. The Proton donor/acceptor role is filled by Glu-421. Glu-422 contacts Zn(2+). Ca(2+) contacts are provided by Glu-430 and Glu-433. Residue Asp-450 participates in Zn(2+) binding. N-linked (GlcNAc...) asparagine glycosylation is found at Asn-456 and Asn-497. Residue His-550 participates in Zn(2+) binding. Asn-593 and Asn-620 each carry an N-linked (GlcNAc...) asparagine glycan.

It belongs to the peptidase M28 family. M28B subfamily. As to quaternary structure, homodimer. Zn(2+) serves as cofactor. Post-translationally, N-glycosylated. Detected on apical villi on the brush border membrane of ileum enterocytes (at protein level). Mainly expressed in the distal small intestine.

Its subcellular location is the apical cell membrane. Its function is as follows. Aminopeptidase with broad substrate specificity. Has lower activity with substrates that have Asp or Glu in the P2' position, or Pro in the P3' position. Lacks activity with substrates that have both Pro in the P3' position and Asp or Glu in the P2' position. Lacks carboxypeptidase activity. Lacks dipeptidyl-peptidase IV type activity. This chain is Aminopeptidase NAALADL1 (Naaladl1), found in Rattus norvegicus (Rat).